We begin with the raw amino-acid sequence, 101 residues long: Small ribosomal subunit protein uS14 (101 aa).

Belongs to the universal ribosomal protein uS14 family. As to quaternary structure, part of the 30S ribosomal subunit. Contacts proteins S3 and S10.

Its function is as follows. Binds 16S rRNA, required for the assembly of 30S particles and may also be responsible for determining the conformation of the 16S rRNA at the A site. This is Small ribosomal subunit protein uS14 from Burkholderia vietnamiensis (strain G4 / LMG 22486) (Burkholderia cepacia (strain R1808)).